A 547-amino-acid polypeptide reads, in one-letter code: Solute carrier family 22 member 25 (547 aa).

Residues 1–9 (MAFQDLLDQ) lie on the Cytoplasmic side of the membrane. The chain crosses the membrane as a helical span at residues 10–30 (VGGLGRFQILQMVFLIMFNVI). The Extracellular segment spans residues 31-145 (VYHQTQLENF…DLVCESQPLN (115 aa)). N-linked (GlcNAc...) asparagine glycans are attached at residues asparagine 56 and asparagine 102. The chain crosses the membrane as a helical span at residues 146–166 (SVAKFLFMAGMMVGGNLYGHL). Over 167 to 177 (SDRFGRKFVLR) the chain is Cytoplasmic. The helical transmembrane segment at 178–198 (WSYLQLAIVGTCAAFAPTILV) threads the bilayer. Topologically, residues 199-204 (YCSLRF) are extracellular. The helical transmembrane segment at 205–225 (LAGAATFSIIVNTVLLIVEWI) threads the bilayer. Residues 226–234 (THQFCAMAL) lie on the Cytoplasmic side of the membrane. A helical membrane pass occupies residues 235-255 (TLTLCAASIGHITLGSLAFVI). The Extracellular portion of the chain corresponds to 256–259 (RDQC). Residues 260-280 (ILQLVMSAPCFVFFLFSRWLA) form a helical membrane-spanning segment. Residues 281–349 (ESARWLIINN…LLRIPNICKR (69 aa)) are Cytoplasmic-facing. Residues 350-370 (ICFLSFVRFASTIPFWGLTLH) form a helical membrane-spanning segment. Topologically, residues 371–377 (LQHLGNN) are extracellular. The helical transmembrane segment at 378 to 398 (VFLLQTLFGAVTLLANCVAPW) threads the bilayer. Topologically, residues 399–406 (ALNHMSRR) are cytoplasmic. The chain crosses the membrane as a helical span at residues 407–427 (LSQMLLMFLLATCLLAIIFVP). Topologically, residues 428 to 434 (QEMQTLR) are extracellular. Residues 435–455 (VVLATLGVGAASLGITCSTAQ) form a helical membrane-spanning segment. At 456 to 470 (ENELIPSIIRGRATG) the chain is on the cytoplasmic side. Residues 471 to 491 (ITGNFANIGGALASLMMILSI) traverse the membrane as a helical segment. The Extracellular segment spans residues 492–494 (YSR). Residues 495–515 (PLPWIIYGVFAILSGLVVLLL) form a helical membrane-spanning segment. The Cytoplasmic portion of the chain corresponds to 516–547 (PETRNQPLLDSIQDVENEGVNSLAAPQRSSVL).

Belongs to the major facilitator (TC 2.A.1) superfamily. Organic cation transporter (TC 2.A.1.19) family. In terms of tissue distribution, expressed exclusively in liver in both embryo and adult.

The protein localises to the membrane. This is Solute carrier family 22 member 25 from Homo sapiens (Human).